The following is a 110-amino-acid chain: Protein NATD1 (110 aa).

Residues 19-109 (EHDKKRRQFS…PHPQYLERIL (91 aa)) enclose the N-acetyltransferase domain.

It belongs to the NATD1 family.

In Danio rerio (Zebrafish), this protein is Protein NATD1 (natd1).